We begin with the raw amino-acid sequence, 225 residues long: UPF0758 protein Ping_0056 (225 aa).

Positions 103–225 constitute an MPN domain; the sequence is ALTSAAQTKA…CTSFAENGWI (123 aa). Zn(2+) is bound by residues His174, His176, and Asp187. The JAMM motif motif lies at 174–187; sequence HNHPSGDPSASEAD.

It belongs to the UPF0758 family.

The chain is UPF0758 protein Ping_0056 from Psychromonas ingrahamii (strain DSM 17664 / CCUG 51855 / 37).